Here is a 118-residue protein sequence, read N- to C-terminus: Small ribosomal subunit protein uS13 (118 aa).

Residues Arg92–Lys118 form a disordered region.

This sequence belongs to the universal ribosomal protein uS13 family. Part of the 30S ribosomal subunit. Forms a loose heterodimer with protein S19. Forms two bridges to the 50S subunit in the 70S ribosome.

Located at the top of the head of the 30S subunit, it contacts several helices of the 16S rRNA. In the 70S ribosome it contacts the 23S rRNA (bridge B1a) and protein L5 of the 50S subunit (bridge B1b), connecting the 2 subunits; these bridges are implicated in subunit movement. Contacts the tRNAs in the A and P-sites. The chain is Small ribosomal subunit protein uS13 from Xanthomonas campestris pv. campestris (strain ATCC 33913 / DSM 3586 / NCPPB 528 / LMG 568 / P 25).